Here is a 69-residue protein sequence, read N- to C-terminus: MKEGIHPTYYHDAVVRCACGETFITGSTKKEIHVEICSKCHPFFTGKQKFVDTTGRVERFMKKYGLDQK.

Residues Cys17, Cys19, Cys37, and Cys40 each coordinate Zn(2+).

The protein belongs to the bacterial ribosomal protein bL31 family. Type A subfamily. Part of the 50S ribosomal subunit. Zn(2+) is required as a cofactor.

Its function is as follows. Binds the 23S rRNA. The chain is Large ribosomal subunit protein bL31 from Caldicellulosiruptor bescii (strain ATCC BAA-1888 / DSM 6725 / KCTC 15123 / Z-1320) (Anaerocellum thermophilum).